We begin with the raw amino-acid sequence, 295 residues long: MLVVLLTAALLVLSSAQGVDEEVVYEDSSQQLELEQQSQGHGQHHPKPPPGGLPPRPPASDENGDGDDNDDGDDDGSGDDVNRPERPPQHGGNHHHPHHPPPAAGPQRPPQPGSPQGPPPPGGPQQRPPQGPPPQGGPQRPPQPGSPQGPPPPGGPQQRPPQGPPPQGGPQRPPQPGSPQGPPPPGGPQQRAPQGPPPQGGPQRPPQPGSPQGPPPPGGPQQRPPQGPPPQGGPQRPPQPGSPQGPPPPGGPQQRPPQGPPPQGGPQRPPQPGNPQGPPQQGGQQQSSFLWSFSA.

The N-terminal stretch at 1–16 (MLVVLLTAALLVLSSA) is a signal peptide. The interval 16–295 (AQGVDEEVVY…QSSFLWSFSA (280 aa)) is disordered. The segment covering 26–41 (EDSSQQLELEQQSQGH) has biased composition (low complexity). Pro residues predominate over residues 48-58 (PPPGGLPPRPP). A compositionally biased stretch (acidic residues) spans 62-78 (ENGDGDDNDDGDDDGSG). Composition is skewed to pro residues over residues 100-187 (PPPA…PPGG) and 194-278 (QGPP…PQGP).

Contains glycosaminoglycans of chondroitin-sulfate and heparan types.

It is found in the secreted. The sequence is that of Proline-rich proteoglycan 2 (Prpg2) from Rattus norvegicus (Rat).